An 814-amino-acid chain; its full sequence is Exostosin-like-3 homolog (814 aa).

The Cytoplasmic portion of the chain corresponds to 1–14; sequence MAIKLNGSSRSFVP. The chain crosses the membrane as a helical; Signal-anchor for type II membrane protein span at residues 15 to 35; the sequence is SLRVSAFLIFIFFVITYIIIY. N-linked (GlcNAc...) asparagine glycans are attached at residues Asn-36, Asn-227, Asn-297, Asn-322, Asn-454, and Asn-492. Topologically, residues 36–814 are lumenal; the sequence is NVSFSEPSWI…QNHQKCFKYV (779 aa). UDP-N-acetyl-alpha-D-glucosamine is bound by residues Arg-570, Asn-595, Asn-620, Arg-625, Asp-641, Asp-642, and Asp-643. Asp-643 serves as a coordination point for Mn(2+). N-linked (GlcNAc...) asparagine glycosylation occurs at Asn-685. Cys-726 and Cys-774 are oxidised to a cystine. The UDP-N-acetyl-alpha-D-glucosamine site is built by Glu-727, Asp-728, and Arg-771. Asp-728 is an active-site residue.

Belongs to the glycosyltransferase 47 family. Interacts with rib-1. The cofactor is Mn(2+).

It is found in the endoplasmic reticulum membrane. The protein resides in the golgi apparatus membrane. It carries out the reaction 3-O-(beta-D-GlcA-(1-&gt;3)-beta-D-Gal-(1-&gt;3)-beta-D-Gal-(1-&gt;4)-beta-D-Xyl)-L-seryl-[protein] + UDP-N-acetyl-alpha-D-glucosamine = 3-O-(alpha-D-GlcNAc-(1-&gt;4)-beta-D-GlcA-(1-&gt;3)-beta-D-Gal-(1-&gt;3)-beta-D-Gal-(1-&gt;4)-beta-D-Xyl)-L-seryl-[protein] + UDP + H(+). It catalyses the reaction 3-O-{[(1-&gt;4)-beta-D-GlcA-(1-&gt;4)-alpha-D-GlcNAc](n)-(1-&gt;4)-beta-D-GlcA-(1-&gt;3)-beta-D-Gal-(1-&gt;3)-beta-D-Gal-(1-&gt;4)-beta-D-Xyl}-L-seryl-[protein] + UDP-N-acetyl-alpha-D-glucosamine = 3-O-{alpha-D-GlcNAc-[(1-&gt;4)-beta-D-GlcA-(1-&gt;4)-alpha-D-GlcNAc](n)-(1-&gt;4)-beta-D-GlcA-(1-&gt;3)-beta-D-Gal-(1-&gt;3)-beta-D-Gal-(1-&gt;4)-beta-D-Xyl}-L-seryl-[protein] + UDP + H(+). The enzyme catalyses 3-O-{alpha-D-GlcNAc-[(1-&gt;4)-beta-D-GlcA-(1-&gt;4)-alpha-D-GlcNAc](n)-(1-&gt;4)-beta-D-GlcA-(1-&gt;3)-beta-D-Gal-(1-&gt;3)-beta-D-Gal-(1-&gt;4)-beta-D-Xyl}-L-seryl-[protein] + UDP-alpha-D-glucuronate = 3-O-{[(1-&gt;4)-beta-D-GlcA-(1-&gt;4)-alpha-D-GlcNAc](n+1)-(1-&gt;4)-beta-D-GlcA-(1-&gt;3)-beta-D-Gal-(1-&gt;3)-beta-D-Gal-(1-&gt;4)-beta-D-Xyl}-L-seryl-[protein] + UDP + H(+). It participates in glycan metabolism; heparan sulfate biosynthesis. Binding to rib-1 is required for GlcAT-II activity and for increasing GlcNAc-II activity in vitro. Glycosyltransferase required for the biosynthesis of heparan sulfate. Initiates heparan sulfate synthesis by transferring GlcNAc to the (GlcA-Gal-Gal-Xyl-)Ser core linker (GlcNAcT-I activity). In association with rib-1, is also responsible for the alternating addition of beta-1-4-linked glucuronic acid (GlcA) and alpha-1-4-linked N-acetylglucosamine (GlcNAc) units to nascent heparan sulfate chains (GlcNAcT-II and GlcAT-II activities). Required for normal ventral epidermal enclosure during the early stages of embryonic development. In addition, involved in the elongation of the pharyngeal isthmus during the later stages of embryonic development. Involved in the directed migration of hermaphrodite-specific neurons. The polypeptide is Exostosin-like-3 homolog (rib-2) (Caenorhabditis elegans).